The chain runs to 137 residues: ATP synthase epsilon chain (137 aa).

This sequence belongs to the ATPase epsilon chain family. As to quaternary structure, F-type ATPases have 2 components, CF(1) - the catalytic core - and CF(0) - the membrane proton channel. CF(1) has five subunits: alpha(3), beta(3), gamma(1), delta(1), epsilon(1). CF(0) has three main subunits: a, b and c.

Its subcellular location is the cellular thylakoid membrane. Functionally, produces ATP from ADP in the presence of a proton gradient across the membrane. The polypeptide is ATP synthase epsilon chain (atpC) (Synechococcus elongatus (strain ATCC 33912 / PCC 7942 / FACHB-805) (Anacystis nidulans R2)).